Here is an 88-residue protein sequence, read N- to C-terminus: Small ribosomal subunit protein uS15c (88 aa).

This sequence belongs to the universal ribosomal protein uS15 family. As to quaternary structure, part of the 30S ribosomal subunit.

Its subcellular location is the plastid. It is found in the chloroplast. The chain is Small ribosomal subunit protein uS15c (rps15) from Nasturtium officinale (Watercress).